A 339-amino-acid polypeptide reads, in one-letter code: Phenylalanine--tRNA ligase alpha subunit (339 aa).

E262 contacts Mg(2+).

This sequence belongs to the class-II aminoacyl-tRNA synthetase family. Phe-tRNA synthetase alpha subunit type 1 subfamily. As to quaternary structure, tetramer of two alpha and two beta subunits. Requires Mg(2+) as cofactor.

It is found in the cytoplasm. The enzyme catalyses tRNA(Phe) + L-phenylalanine + ATP = L-phenylalanyl-tRNA(Phe) + AMP + diphosphate + H(+). In Neisseria gonorrhoeae (strain ATCC 700825 / FA 1090), this protein is Phenylalanine--tRNA ligase alpha subunit.